The sequence spans 138 residues: Protein transport protein got1 homolog (138 aa).

The Cytoplasmic segment spans residues 1–7 (MFTDQQK). The helical transmembrane segment at 8-28 (IGAMLSAMGLFFGFLGVLLFL) threads the bilayer. Over 29–30 (DR) the chain is Lumenal. Residues 31-51 (NLLALGNLLLVSGIVLILGLQ) form a helical membrane-spanning segment. Topologically, residues 52-62 (KTTKFFAQKKK) are cytoplasmic. Residues 63-82 (IKGTILFFFGIVVLLVTRWT) traverse the membrane as a helical segment. Residues 83-87 (FVGMV) lie on the Lumenal side of the membrane. The chain crosses the membrane as a helical span at residues 88–108 (IEIFGFVNLFGDAFPIVISIL). Topologically, residues 109–138 (RKLPIIGNILNHPLVNRLLQKADSGNELPF) are cytoplasmic.

It belongs to the GOT1 family.

The protein localises to the golgi apparatus membrane. Its function is as follows. May be involved in fusion of ER-derived transport vesicles with the Golgi complex. This is Protein transport protein got1 homolog (golt1) from Dictyostelium discoideum (Social amoeba).